We begin with the raw amino-acid sequence, 392 residues long: 2-oxoisovalerate dehydrogenase subunit beta, mitochondrial (392 aa).

The transit peptide at 1 to 50 (MAAVAAFAGWLLRLRAAGADGPWRRLCGAGLSRGFLQSASAYGAAAQRRQ) directs the protein to the mitochondrion. Tyrosine 152 contacts thiamine diphosphate. K(+) contacts are provided by glycine 178, leucine 180, threonine 181, cysteine 228, and aspartate 231. Lysine 232 carries the post-translational modification N6-acetyllysine. Asparagine 233 contributes to the K(+) binding site. Lysine 241 bears the N6-acetyllysine mark.

As to quaternary structure, heterotetramer of 2 alpha/BCKDHA and 2 beta chains/BCKDHB that forms the branched-chain alpha-keto acid decarboxylase (E1) component of the BCKD complex. The branched-chain alpha-ketoacid dehydrogenase is a large complex composed of three major building blocks E1, E2 and E3. It is organized around E2, a 24-meric cubic core composed of DBT, to which are associated 6 to 12 copies of E1, and approximately 6 copies of the dehydrogenase E3, a DLD dimer. It depends on thiamine diphosphate as a cofactor.

The protein resides in the mitochondrion matrix. It carries out the reaction N(6)-[(R)-lipoyl]-L-lysyl-[protein] + 3-methyl-2-oxobutanoate + H(+) = N(6)-[(R)-S(8)-2-methylpropanoyldihydrolipoyl]-L-lysyl-[protein] + CO2. In terms of biological role, together with BCKDHA forms the heterotetrameric E1 subunit of the mitochondrial branched-chain alpha-ketoacid dehydrogenase (BCKD) complex. The BCKD complex catalyzes the multi-step oxidative decarboxylation of alpha-ketoacids derived from the branched-chain amino-acids valine, leucine and isoleucine producing CO2 and acyl-CoA which is subsequently utilized to produce energy. The E1 subunit catalyzes the first step with the decarboxylation of the alpha-ketoacid forming an enzyme-product intermediate. A reductive acylation mediated by the lipoylamide cofactor of E2 extracts the acyl group from the E1 active site for the next step of the reaction. This Bos taurus (Bovine) protein is 2-oxoisovalerate dehydrogenase subunit beta, mitochondrial (BCKDHB).